The sequence spans 400 residues: Subtilisin-like protease 11 (400 aa).

Positions 1–19 are cleaved as a signal peptide; sequence MGLFTVVFTAIAALSAVDA. Positions 20 to 117 are excised as a propeptide; it reads AELLRSPNSK…VEHDRYVYID (98 aa). Residues 35-116 form the Inhibitor I9 domain; sequence SYLVVMKDSV…FVEHDRYVYI (82 aa). The 274-residue stretch at 127–400 folds into the Peptidase S8 domain; that stretch reads SWGLGRVSHR…NKLLYNGSGQ (274 aa). Asn-138 carries N-linked (GlcNAc...) asparagine glycosylation. Active-site charge relay system residues include Asp-159 and His-191. N-linked (GlcNAc...) asparagine glycans are attached at residues Asn-252, Asn-336, and Asn-337. Ser-346 serves as the catalytic Charge relay system. N-linked (GlcNAc...) asparagine glycosylation is found at Asn-388 and Asn-396.

It belongs to the peptidase S8 family.

It is found in the secreted. Its function is as follows. Secreted subtilisin-like serine protease with keratinolytic activity that contributes to pathogenicity. This chain is Subtilisin-like protease 11 (SUB11), found in Arthroderma gypseum (strain ATCC MYA-4604 / CBS 118893) (Microsporum gypseum).